Here is a 343-residue protein sequence, read N- to C-terminus: Anthranilate phosphoribosyltransferase (343 aa).

Residues Gly81, 84–85 (GD), 91–94 (NLST), 109–117 (KHGNRSVSS), and Ser121 contribute to the 5-phospho-alpha-D-ribose 1-diphosphate site. An anthranilate-binding site is contributed by Gly81. Ser93 is a Mg(2+) binding site. Asn112 provides a ligand contact to anthranilate. Arg167 is an anthranilate binding site. Mg(2+) contacts are provided by Asp226 and Glu227.

It belongs to the anthranilate phosphoribosyltransferase family. In terms of assembly, homodimer. The cofactor is Mg(2+).

The enzyme catalyses N-(5-phospho-beta-D-ribosyl)anthranilate + diphosphate = 5-phospho-alpha-D-ribose 1-diphosphate + anthranilate. Its pathway is amino-acid biosynthesis; L-tryptophan biosynthesis; L-tryptophan from chorismate: step 2/5. In terms of biological role, catalyzes the transfer of the phosphoribosyl group of 5-phosphorylribose-1-pyrophosphate (PRPP) to anthranilate to yield N-(5'-phosphoribosyl)-anthranilate (PRA). The polypeptide is Anthranilate phosphoribosyltransferase (Cellvibrio japonicus (strain Ueda107) (Pseudomonas fluorescens subsp. cellulosa)).